The primary structure comprises 98 residues: UPF0235 protein azo3464 (98 aa).

It belongs to the UPF0235 family.

The sequence is that of UPF0235 protein azo3464 from Azoarcus sp. (strain BH72).